The sequence spans 22 residues: Defensin D1 (22 aa).

It belongs to the DEFL family. Group II subfamily.

In terms of biological role, antimicrobial peptide. Active against Gram-positive and Gram-negative bacterial pathogens. The polypeptide is Defensin D1 (Spinacia oleracea (Spinach)).